The sequence spans 620 residues: Chaperone protein HscA homolog (620 aa).

The protein belongs to the heat shock protein 70 family.

Chaperone involved in the maturation of iron-sulfur cluster-containing proteins. Has a low intrinsic ATPase activity which is markedly stimulated by HscB. The chain is Chaperone protein HscA homolog from Shewanella baltica (strain OS195).